The following is a 375-amino-acid chain: GDP-mannose-dependent alpha-mannosyltransferase (375 aa).

Belongs to the glycosyltransferase group 1 family. Glycosyltransferase 4 subfamily.

The protein operates within phospholipid metabolism; phosphatidylinositol metabolism. Functionally, catalyzes the addition of a mannose residue from GDP-D-mannose to GlcAGroAc2 to generate 1,2-di-O-C16/C18:1-(alpha-D-mannopyranosyl)-(1-4)-(alpha-D-glucopyranosyluronic acid)-(1-3)-glycerol(ManGlcAGroAc2). This is GDP-mannose-dependent alpha-mannosyltransferase (mgtA) from Mycolicibacterium smegmatis (strain ATCC 700084 / mc(2)155) (Mycobacterium smegmatis).